The primary structure comprises 197 residues: Fucoxanthin-chlorophyll a-c binding protein D, chloroplastic (197 aa).

The transit peptide at 1 to 31 directs the protein to the chloroplast; sequence MKTAVIASLIAGAAAFAPAKNAARTSVATNM. The next 3 helical transmembrane spans lie at 73–94, 114–133, and 174–196; these read ISML…PGTI, PAGG…SSVM, and GRAA…SLLP.

Belongs to the fucoxanthin chlorophyll protein family. As to quaternary structure, the LHC complex of chromophytic algae is composed of fucoxanthin, chlorophyll A and C bound non-covalently by fucoxanthin chlorophyll proteins (FCPs). The ratio of the pigments in LHC; fucoxanthin: chlorophyll C: chlorophyll A; (0.6-1): (0.1-0.3): (1).

The protein resides in the plastid. It is found in the chloroplast thylakoid membrane. In terms of biological role, the light-harvesting complex (LHC) functions as a light receptor, it captures and delivers excitation energy to photosystems with which it is closely associated. Energy is transferred from the carotenoid and chlorophyll C (or B) to chlorophyll A and the photosynthetic reaction centers where it is used to synthesize ATP and reducing power. In Phaeodactylum tricornutum (Diatom), this protein is Fucoxanthin-chlorophyll a-c binding protein D, chloroplastic (FCPD).